A 435-amino-acid polypeptide reads, in one-letter code: Protein GOLM2 (435 aa).

An N-acetylmethionine modification is found at Met-1. Topologically, residues 1–14 (MVGFGANRRAGRLP) are cytoplasmic. A helical; Signal-anchor for type II membrane protein transmembrane segment spans residues 15–35 (SFVLVVLLVVIVVLAFNYWSI). A coiled-coil region spans residues 35–194 (ISSRHVLLQE…DQFLQEQKET (160 aa)). Residues 36 to 435 (SSRHVLLQEE…YGKQRFSDVL (400 aa)) lie on the Lumenal side of the membrane. Basic and acidic residues-rich tracts occupy residues 191-212 (QKET…DHGA) and 223-239 (DANK…PHGK). Disordered stretches follow at residues 191-239 (QKET…PHGK) and 271-435 (PPVL…SDVL). Residue Ser-232 is modified to Phosphoserine. Polar residues-rich tracts occupy residues 282–294 (QTIS…QPLS) and 302–320 (HLNQ…SNPL). The span at 343–361 (ATRDRANDFHKLKQSRFFD) shows a compositional bias: basic and acidic residues. Ser-365 is subject to Phosphoserine. Positions 398–417 (YNEEEDGDGGEEDVQDDEER) are enriched in acidic residues. The segment covering 425–435 (DYGKQRFSDVL) has biased composition (basic and acidic residues).

It belongs to the GOLM family.

It localises to the membrane. This Mus musculus (Mouse) protein is Protein GOLM2.